Here is a 371-residue protein sequence, read N- to C-terminus: Putative glutamate--cysteine ligase 2 (371 aa).

It belongs to the glutamate--cysteine ligase type 2 family. YbdK subfamily.

The enzyme catalyses L-cysteine + L-glutamate + ATP = gamma-L-glutamyl-L-cysteine + ADP + phosphate + H(+). Functionally, ATP-dependent carboxylate-amine ligase which exhibits weak glutamate--cysteine ligase activity. In Burkholderia multivorans (strain ATCC 17616 / 249), this protein is Putative glutamate--cysteine ligase 2.